Here is a 203-residue protein sequence, read N- to C-terminus: Ribosomal RNA small subunit methyltransferase G (203 aa).

Residues Gly-73, Leu-78, 124–125, and Arg-139 contribute to the S-adenosyl-L-methionine site; that span reads VE.

Belongs to the methyltransferase superfamily. RNA methyltransferase RsmG family.

It is found in the cytoplasm. It catalyses the reaction guanosine(527) in 16S rRNA + S-adenosyl-L-methionine = N(7)-methylguanosine(527) in 16S rRNA + S-adenosyl-L-homocysteine. Its function is as follows. Specifically methylates the N7 position of guanine in position 527 of 16S rRNA. The polypeptide is Ribosomal RNA small subunit methyltransferase G (Haemophilus influenzae (strain PittEE)).